The following is a 90-amino-acid chain: Cell division topological specificity factor 2 (90 aa).

This sequence belongs to the MinE family.

Prevents the cell division inhibition by proteins MinC and MinD at internal division sites while permitting inhibition at polar sites. This ensures cell division at the proper site by restricting the formation of a division septum at the midpoint of the long axis of the cell. This chain is Cell division topological specificity factor 2, found in Syntrophomonas wolfei subsp. wolfei (strain DSM 2245B / Goettingen).